We begin with the raw amino-acid sequence, 670 residues long: E3 ubiquitin-protein ligase TRAF7 (670 aa).

Disordered stretches follow at residues 1–37 and 49–97; these read MSSG…FGPA and GTST…SLHS. Composition is skewed to polar residues over residues 15–31 and 49–67; these read GPSN…TRME and GTST…STLA. Phosphoserine occurs at positions 61, 88, and 91. An RING-type zinc finger spans residues 131–165; sequence CQLCCSVFKDPVITTCGHTFCRRCALKSEKCPVDN. Residues 222-276 form a TRAF-type zinc finger; the sequence is HEGSCDYRPVRCPNNPSCPPLLRMNLEAHLKECEHIKCPHSKYGCTFIGNQDTYE. WD repeat units lie at residues 394-433, 437-474, 477-513, 515-554, 557-594, 597-638, and 641-669; these read GHQG…KCQK, GHDG…KVNT, AHDN…LKLK, ELTG…CIHV, TSGG…QVRT, GHVG…CTQT, and RHQG…KVWT.

Belongs to the WD repeat TRAF7 family. As to quaternary structure, homodimer. Interacts with MAP3K3 and promotes the kinase activity of this enzyme. In terms of processing, phosphorylated by MAP3K3. Post-translationally, ubiquitinates itself upon phosphorylation. In terms of tissue distribution, ubiquitously expressed with high levels in skeletal muscle, heart, colon, spleen, kidney, liver and placenta.

The protein resides in the cytoplasmic vesicle. Its subcellular location is the cytoplasm. It localises to the nucleus. The enzyme catalyses S-ubiquitinyl-[E2 ubiquitin-conjugating enzyme]-L-cysteine + [acceptor protein]-L-lysine = [E2 ubiquitin-conjugating enzyme]-L-cysteine + N(6)-ubiquitinyl-[acceptor protein]-L-lysine.. It functions in the pathway protein modification; protein ubiquitination. Its function is as follows. E3 ubiquitin and SUMO-protein ligase that plays a role in different biological processes such as innate immunity, inflammation or apoptosis. Potentiates MAP3K3-mediated activation of JUN/AP1 and DDIT3 transcriptional regulators. Negatively regulates MYB transcriptional activity by sequestering it to the cytosol via SUMOylation. Plays a role in the phosphorylation of MAPK1 and/or MAPK3, probably via its interaction with MAP3K3. Negatively regulates RLR-mediated innate immunity by promoting 'Lys-48'-linked ubiquitination of TBK1 through its RING domain to inhibit the cellular antiviral response. Promotes 'Lys-29'-linked polyubiquitination of NEMO/IKBKG and RELA leading to targeting these two proteins to lysosomal degradative pathways, reducing the transcriptional activity of NF-kappa-B. This is E3 ubiquitin-protein ligase TRAF7 (TRAF7) from Homo sapiens (Human).